Reading from the N-terminus, the 339-residue chain is Methionine import ATP-binding protein MetN 2 (339 aa).

The ABC transporter domain maps to 2 to 241 (ISFNNVSKVY…PKTKTTQNFV (240 aa)). Position 38–45 (38–45 (GFSGAGKS)) interacts with ATP.

This sequence belongs to the ABC transporter superfamily. Methionine importer (TC 3.A.1.24) family. In terms of assembly, the complex is composed of two ATP-binding proteins (MetN), two transmembrane proteins (MetI) and a solute-binding protein (MetQ).

It localises to the cell membrane. The catalysed reaction is L-methionine(out) + ATP + H2O = L-methionine(in) + ADP + phosphate + H(+). It catalyses the reaction D-methionine(out) + ATP + H2O = D-methionine(in) + ADP + phosphate + H(+). In terms of biological role, part of the ABC transporter complex MetNIQ involved in methionine import. Responsible for energy coupling to the transport system. The sequence is that of Methionine import ATP-binding protein MetN 2 from Bacillus cereus (strain ZK / E33L).